The chain runs to 433 residues: MLDIQLLRKDLDGVAKRLADRGYTLDVAAFSALEAERRAIQTHTEELQARRNSLSKQIGAMKGKGEDTSAVMAEVGGIGDDMKASEAKLGEIQARLSDLMLGMPNVAHESVPVGKDEADNVEARRWGTPRQFDFEVKDHVDVGTPLGLDFETGAKLAGARFTMLRGPIARLHRALAQFMIDTHTQQHGYTETYTPYIVNPEILYGTGQLPKFADDMFRVEKGGAENTVTQYLISTSEISLTNTVRESIVDASALPIKLTAHSPCFRSEAGSYGRDTRGMIRQHQFDKVEMVQVVAPETSYAALDEMVGHAEAILQKLGLPYRVITLCTGDMGFSAAKTFDLEVWLPAQNTYREISSCSNTEAFQARRMQARFRNAQGKPELVHTLNGSGLAVGRTLVAVLENYQNADGSVTVPEVLRPYMGGMERIDAPAQAS.

235-237 (TSE) lines the L-serine pocket. 266 to 268 (RSE) is a binding site for ATP. Glu-289 contributes to the L-serine binding site. 353–356 (EISS) lines the ATP pocket. Ser-388 lines the L-serine pocket.

Belongs to the class-II aminoacyl-tRNA synthetase family. Type-1 seryl-tRNA synthetase subfamily. As to quaternary structure, homodimer. The tRNA molecule binds across the dimer.

It localises to the cytoplasm. It catalyses the reaction tRNA(Ser) + L-serine + ATP = L-seryl-tRNA(Ser) + AMP + diphosphate + H(+). It carries out the reaction tRNA(Sec) + L-serine + ATP = L-seryl-tRNA(Sec) + AMP + diphosphate + H(+). The protein operates within aminoacyl-tRNA biosynthesis; selenocysteinyl-tRNA(Sec) biosynthesis; L-seryl-tRNA(Sec) from L-serine and tRNA(Sec): step 1/1. Catalyzes the attachment of serine to tRNA(Ser). Is also able to aminoacylate tRNA(Sec) with serine, to form the misacylated tRNA L-seryl-tRNA(Sec), which will be further converted into selenocysteinyl-tRNA(Sec). The polypeptide is Serine--tRNA ligase (Burkholderia cenocepacia (strain HI2424)).